Reading from the N-terminus, the 75-residue chain is Small ribosomal subunit protein bS18 (75 aa).

Belongs to the bacterial ribosomal protein bS18 family. As to quaternary structure, part of the 30S ribosomal subunit. Forms a tight heterodimer with protein bS6.

Its function is as follows. Binds as a heterodimer with protein bS6 to the central domain of the 16S rRNA, where it helps stabilize the platform of the 30S subunit. The polypeptide is Small ribosomal subunit protein bS18 (Moorella thermoacetica (strain ATCC 39073 / JCM 9320)).